The following is a 380-amino-acid chain: Cytochrome b (380 aa).

4 helical membrane-spanning segments follow: residues 34-54 (FGSL…LLAM), 78-99 (WLIR…YLHI), 114-134 (WNTG…GYVL), and 179-199 (FFAL…IHLT). Heme b is bound by residues His84 and His98. Heme b contacts are provided by His183 and His197. Residue His202 participates in a ubiquinone binding. The next 4 membrane-spanning stretches (helical) occupy residues 227–247 (LKDI…ALFS), 289–309 (LGGV…PLLH), 321–341 (LSQL…WIGS), and 348–368 (FIII…ILFP).

It belongs to the cytochrome b family. The cytochrome bc1 complex contains 11 subunits: 3 respiratory subunits (MT-CYB, CYC1 and UQCRFS1), 2 core proteins (UQCRC1 and UQCRC2) and 6 low-molecular weight proteins (UQCRH/QCR6, UQCRB/QCR7, UQCRQ/QCR8, UQCR10/QCR9, UQCR11/QCR10 and a cleavage product of UQCRFS1). This cytochrome bc1 complex then forms a dimer. The cofactor is heme b.

It localises to the mitochondrion inner membrane. Its function is as follows. Component of the ubiquinol-cytochrome c reductase complex (complex III or cytochrome b-c1 complex) that is part of the mitochondrial respiratory chain. The b-c1 complex mediates electron transfer from ubiquinol to cytochrome c. Contributes to the generation of a proton gradient across the mitochondrial membrane that is then used for ATP synthesis. The chain is Cytochrome b (MT-CYB) from Oceanodroma microsoma (Least storm petrel).